The sequence spans 64 residues: Large ribosomal subunit protein bL35 (64 aa).

Belongs to the bacterial ribosomal protein bL35 family.

This chain is Large ribosomal subunit protein bL35, found in Kineococcus radiotolerans (strain ATCC BAA-149 / DSM 14245 / SRS30216).